We begin with the raw amino-acid sequence, 337 residues long: 1-aminocyclopropane-1-carboxylate deaminase (337 aa).

Position 50 is an N6-(pyridoxal phosphate)lysine (Lys-50). The Nucleophile role is filled by Ser-77.

Belongs to the ACC deaminase/D-cysteine desulfhydrase family. In terms of assembly, homotrimer. Requires pyridoxal 5'-phosphate as cofactor.

It carries out the reaction 1-aminocyclopropane-1-carboxylate + H2O = 2-oxobutanoate + NH4(+). Catalyzes a cyclopropane ring-opening reaction, the irreversible conversion of 1-aminocyclopropane-1-carboxylate (ACC) to ammonia and alpha-ketobutyrate. Allows growth on ACC as a nitrogen source. This Allorhizobium ampelinum (strain ATCC BAA-846 / DSM 112012 / S4) (Agrobacterium vitis (strain S4)) protein is 1-aminocyclopropane-1-carboxylate deaminase.